A 71-amino-acid polypeptide reads, in one-letter code: ATP synthase F(0) complex subunit e, mitochondrial (71 aa).

Position 34 is an N6-acetyllysine (lysine 34).

This sequence belongs to the ATPase e subunit family. Component of the ATP synthase complex composed at least of ATP5F1A/subunit alpha, ATP5F1B/subunit beta, ATP5MC1/subunit c (homooctomer), MT-ATP6/subunit a, MT-ATP8/subunit 8, ATP5ME/subunit e, ATP5MF/subunit f, ATP5MG/subunit g, ATP5MK/subunit k, ATP5MJ/subunit j, ATP5F1C/subunit gamma, ATP5F1D/subunit delta, ATP5F1E/subunit epsilon, ATP5PF/subunit F6, ATP5PB/subunit b, ATP5PD/subunit d, ATP5PO/subunit OSCP. ATP synthase complex consists of a soluble F(1) head domain (subunits alpha(3) and beta(3)) - the catalytic core - and a membrane F(0) domain - the membrane proton channel (subunits c, a, 8, e, f, g, k and j). These two domains are linked by a central stalk (subunits gamma, delta, and epsilon) rotating inside the F1 region and a stationary peripheral stalk (subunits F6, b, d, and OSCP).

Its subcellular location is the mitochondrion. The protein localises to the mitochondrion inner membrane. In terms of biological role, subunit e, of the mitochondrial membrane ATP synthase complex (F(1)F(0) ATP synthase or Complex V) that produces ATP from ADP in the presence of a proton gradient across the membrane which is generated by electron transport complexes of the respiratory chain. ATP synthase complex consist of a soluble F(1) head domain - the catalytic core - and a membrane F(1) domain - the membrane proton channel. These two domains are linked by a central stalk rotating inside the F(1) region and a stationary peripheral stalk. During catalysis, ATP synthesis in the catalytic domain of F(1) is coupled via a rotary mechanism of the central stalk subunits to proton translocation. In vivo, can only synthesize ATP although its ATP hydrolase activity can be activated artificially in vitro. Part of the complex F(0) domain. This chain is ATP synthase F(0) complex subunit e, mitochondrial, found in Bos taurus (Bovine).